A 93-amino-acid chain; its full sequence is Cobalt transport protein CbiN (93 aa).

Helical transmembrane passes span 5 to 25 (LILLAMVVALMILPFFINHGG) and 63 to 83 (LLFTLQGSLGAAVIFYILGYA).

This sequence belongs to the CbiN family. In terms of assembly, forms an energy-coupling factor (ECF) transporter complex composed of an ATP-binding protein (A component, CbiO), a transmembrane protein (T component, CbiQ) and 2 possible substrate-capture proteins (S components, CbiM and CbiN) of unknown stoichimetry.

The protein resides in the cell inner membrane. It participates in cofactor biosynthesis; adenosylcobalamin biosynthesis. Functionally, part of the energy-coupling factor (ECF) transporter complex CbiMNOQ involved in cobalt import. The chain is Cobalt transport protein CbiN from Klebsiella pneumoniae (strain 342).